Consider the following 400-residue polypeptide: Hyaluronan and proteoglycan link protein 4 (400 aa).

A signal peptide spans 1–30 (MACAPGALGHRALWAVAWGLLLLVPVLAGA). Residues 47-155 (SVVVQTAPGQ…VTNELEDDVG (109 aa)) enclose the Ig-like C2-type domain. Cystine bridges form between cysteine 69–cysteine 144, cysteine 186–cysteine 264, cysteine 210–cysteine 231, cysteine 291–cysteine 361, and cysteine 316–cysteine 337. Asparagine 133 carries an N-linked (GlcNAc...) asparagine glycan. Link domains lie at 164–266 (VVFP…FCFT) and 271–363 (GRVF…YCYR).

This sequence belongs to the HAPLN family. As to expression, expressed predominantly in brain where it is found mainly throughout the midbrain and hindbrain in a perineuronal net pattern.

Its subcellular location is the secreted. The protein localises to the extracellular space. It is found in the extracellular matrix. In terms of biological role, essential for the proper localization of brevican (BCAN), mainly as a perineuronal nets (PNNs)-type deposition in the brainstem and cerebellum thereby playing a key role in the formation and structural organization of PNNs. Contributes to the formation and transmission of inhibitory GABAergic synapses between Purkinje cells and deep cerebellar nuclei neurons. The protein is Hyaluronan and proteoglycan link protein 4 (Hapln4) of Mus musculus (Mouse).